We begin with the raw amino-acid sequence, 249 residues long: 5'-nucleotidase SurE (249 aa).

A divalent metal cation-binding residues include aspartate 8, aspartate 9, serine 39, and asparagine 91.

It belongs to the SurE nucleotidase family. It depends on a divalent metal cation as a cofactor.

It localises to the cytoplasm. It catalyses the reaction a ribonucleoside 5'-phosphate + H2O = a ribonucleoside + phosphate. Its function is as follows. Nucleotidase that shows phosphatase activity on nucleoside 5'-monophosphates. The chain is 5'-nucleotidase SurE from Pseudomonas fluorescens (strain Pf0-1).